The primary structure comprises 1269 residues: Clustered mitochondria protein homolog (1269 aa).

The Clu domain maps to 297–552; that stretch reads PSNNGDFMRT…NTNPVDIEFV (256 aa). Residues 958-969 show a composition bias toward basic and acidic residues; sequence EKKKEESKKAAA. The segment at 958–989 is disordered; that stretch reads EKKKEESKKAAADGEDAGSSGATSKEEEQAKE. TPR repeat units lie at residues 1020-1053 and 1147-1180; these read VSSY…SERC and GQNE…FSKE. A disordered region spans residues 1211 to 1269; it reads LASAQQATKPANISQKKGKKSSSSSPALTNKSVDELLQFIEGPGASKSSKKSKKKHTKN. A compositionally biased stretch (polar residues) spans 1213–1223; that stretch reads SAQQATKPANI. Over residues 1258–1269 the composition is skewed to basic residues; the sequence is SSKKSKKKHTKN.

This sequence belongs to the CLU family. May associate with the eukaryotic translation initiation factor 3 (eIF-3) complex.

The protein localises to the cytoplasm. Functionally, mRNA-binding protein involved in proper cytoplasmic distribution of mitochondria. The chain is Clustered mitochondria protein homolog from Kluyveromyces lactis (strain ATCC 8585 / CBS 2359 / DSM 70799 / NBRC 1267 / NRRL Y-1140 / WM37) (Yeast).